A 489-amino-acid polypeptide reads, in one-letter code: Glycogen synthase (489 aa).

ADP-alpha-D-glucose is bound at residue Lys15.

Belongs to the glycosyltransferase 1 family. Bacterial/plant glycogen synthase subfamily.

The enzyme catalyses [(1-&gt;4)-alpha-D-glucosyl](n) + ADP-alpha-D-glucose = [(1-&gt;4)-alpha-D-glucosyl](n+1) + ADP + H(+). It functions in the pathway glycan biosynthesis; glycogen biosynthesis. In terms of biological role, synthesizes alpha-1,4-glucan chains using ADP-glucose. This is Glycogen synthase from Francisella tularensis subsp. mediasiatica (strain FSC147).